The chain runs to 518 residues: Glutamate--cysteine ligase (518 aa).

Belongs to the glutamate--cysteine ligase type 1 family. Type 1 subfamily.

The enzyme catalyses L-cysteine + L-glutamate + ATP = gamma-L-glutamyl-L-cysteine + ADP + phosphate + H(+). It participates in sulfur metabolism; glutathione biosynthesis; glutathione from L-cysteine and L-glutamate: step 1/2. This chain is Glutamate--cysteine ligase, found in Klebsiella pneumoniae (strain 342).